The chain runs to 456 residues: MNLDIHCEQLSDARWTELLPLLQQYEVVRLDDCGLTEEHCKDIGSALRANPSLTELCLRTNELGDAGVHLVLQGLQSPTCKIQKLSLQNCSLTEAGCGVLPSTLRSLPTLRELHLSDNPLGDAGLRLLCEGLLDPQCHLEKLQLEYCRLTAASCEPLASVLRATRALKELTVSNNDIGEAGARVLGQGLADSACQLETLRLENCGLTPANCKDLCGIVASQASLRELDLGSNGLGDAGIAELCPGLLSPASRLKTLWLWECDITASGCRDLCRVLQAKETLKELSLAGNKLGDEGARLLCESLLQPGCQLESLWVKSCSLTAACCQHVSLMLTQNKHLLELQLSSNKLGDSGIQELCQALSQPGTTLRVLCLGDCEVTNSGCSSLASLLLANRSLRELDLSNNCVGDPGVLQLLGSLEQPGCALEQLVLYDTYWTEEVEDRLQALEGSKPGLRVIS.

N-acetylmethionine is present on methionine 1. 15 LRR repeats span residues 15-43 (WTEL…CKDI), 44-71 (GSAL…VHLV), 72-100 (LQGL…CGVL), 101-128 (PSTL…LRLL), 129-157 (CEGL…CEPL), 158-185 (ASVL…ARVL), 186-214 (GQGL…CKDL), 215-242 (CGIV…IAEL), 243-271 (CPGL…CRDL), 272-299 (CRVL…ARLL), 300-328 (CESL…CQHV), 329-356 (SLML…IQEL), 357-385 (CQAL…CSSL), 386-413 (ASLL…VLQL), and 414-442 (LGSL…EDRL). Position 86 is a phosphoserine (serine 86).

Forms high-affinity heterodimers with RNASE1, ANG and RNASE2.

It localises to the cytoplasm. It is found in the nucleus. In terms of biological role, ribonuclease inhibitor which inhibits RNASE1, RNASE2 and angiogenin (ANG). May play a role in redox homeostasis. Required to inhibit the cytotoxic tRNA ribonuclease activity of ANG in the cytoplasm in absence of stress. Relocates to the nucleus in response to stress, relieving inhibition of ANG in the cytoplasm, and inhibiting the angiogenic activity of ANG in the nucleus. The sequence is that of Ribonuclease inhibitor (RNH1) from Sus scrofa (Pig).